The sequence spans 880 residues: Probable potassium channel AKT5 (880 aa).

The Cytoplasmic portion of the chain corresponds to 1-82 (MGIEKRKKMV…PFDPRYRAWD (82 aa)). A helical membrane pass occupies residues 83–103 (WFLVILVLYTAWASPFEFGFL). At 104–111 (QTPRAPLS) the chain is on the extracellular side. Residues 112–132 (ILDNVVNGFFAVDIVLTFFVA) form a helical membrane-spanning segment. Residues 133–153 (FLDKATYLLVDDPKRIAWRYT) are Cytoplasmic-facing. Residues 154-174 (STWLIFDVVSTVPYELFGSLL) form a helical membrane-spanning segment. The Extracellular segment spans residues 175 to 182 (HNTIQGYG). Residues 183-203 (IFSMLRLWRLHRVSKCFARLE) form a helical; Voltage-sensor membrane-spanning segment. The Cytoplasmic portion of the chain corresponds to 204-217 (KDRKYNYFWIRCTK). The chain crosses the membrane as a helical span at residues 218–238 (LLLVSLFVVHCGACFCYSIAA). The Extracellular portion of the chain corresponds to 239–265 (HYPDPSMTFMALAEANWKQKSLLIRYV). An intramembrane region (pore-forming) is located at residues 266-285 (TAMYWSITTFSTTGYGDIHG). Residues 286 to 291 (NNAEER) are Extracellular-facing. A helical transmembrane segment spans residues 292 to 312 (AFILFYMIFNLGLLAYIIGNM). The Cytoplasmic segment spans residues 313 to 880 (TNLVVHVTSR…GDFLLLLKVS (568 aa)). 396–517 (LFHGISNDLL…IMNNLLQHLK (122 aa)) lines the a nucleoside 3',5'-cyclic phosphate pocket. ANK repeat units follow at residues 541-570 (DLPLSLCFAAARGDDLLLHQLLKRGSNPNE), 574-603 (NGRTALHIAASKGSQYCVVLLLEHGADPNI), 607-636 (EGSVPLWEAIIGRHEENAKLLSENGATLSF), 637-667 (DTVGYFSCLAVGQNNLNALKDIVKYGGDISL), and 671-700 (NGTTALHRAVSEGNLEIVQFLLEKGADMDK). Residues 809–880 (VGGVYPARVT…GDFLLLLKVS (72 aa)) form the KHA domain.

This sequence belongs to the potassium channel family. Plant (TC 1.A.1.4) subfamily. As to quaternary structure, the potassium channel is probably composed of a homo- or heterotetrameric complex of pore-forming subunits. Predominantly expressed in flowers.

The protein localises to the membrane. Its function is as follows. Probable potassium channel. May interact with the cytoskeleton or with regulatory proteins. This is Probable potassium channel AKT5 (AKT5) from Arabidopsis thaliana (Mouse-ear cress).